Reading from the N-terminus, the 319-residue chain is Malate dehydrogenase (319 aa).

NAD(+) contacts are provided by residues 7–13 (GAAGGIG) and aspartate 34. Substrate is bound by residues arginine 81 and arginine 87. NAD(+) contacts are provided by residues asparagine 94 and 117–119 (ITN). Positions 119 and 153 each coordinate substrate. The active-site Proton acceptor is histidine 177. Methionine 227 contacts NAD(+).

It belongs to the LDH/MDH superfamily. MDH type 1 family. As to quaternary structure, homodimer.

The catalysed reaction is (S)-malate + NAD(+) = oxaloacetate + NADH + H(+). In terms of biological role, catalyzes the reversible oxidation of malate to oxaloacetate. In Psychromonas ingrahamii (strain DSM 17664 / CCUG 51855 / 37), this protein is Malate dehydrogenase.